The sequence spans 283 residues: Acetylglutamate kinase (283 aa).

Residues 64 to 65 (GG), Arg-86, and Asn-178 contribute to the substrate site.

Belongs to the acetylglutamate kinase family. ArgB subfamily.

Its subcellular location is the cytoplasm. It catalyses the reaction N-acetyl-L-glutamate + ATP = N-acetyl-L-glutamyl 5-phosphate + ADP. It participates in amino-acid biosynthesis; L-arginine biosynthesis; N(2)-acetyl-L-ornithine from L-glutamate: step 2/4. Functionally, catalyzes the ATP-dependent phosphorylation of N-acetyl-L-glutamate. The chain is Acetylglutamate kinase from Lactococcus lactis subsp. cremoris (strain SK11).